The chain runs to 454 residues: MTDRTCLSIVLAAGEGTRMKSNLPKVLHRVAGLPLVCHVVNAVRGTGKSDVALVVGRGAEDVRSAVEKIAGPVSAFEQKERLGTAHAVLAAREAIARGYDDLLIVFGDTPLIEAQSLLAARERLAQGADLVVIGFRPASPHGYGRLIEEGGQLVAIIEEKEATDEQKKIGFCNGGLMALRGQHALALLDAVGNDNAKGEYYLTDIVAIAHGKGLNVTAIEVPVDNVIGINNRAELAEAETIWQNRKRRELMLSGVTLIAPETVFFSYDTVIEPDVVIEPNVFFGPSVHVASGALIHSFSHLEGAQVGEKAEIGPFARLRPGADLAEKSKVGNFCEVKNAKVGKGAKINHLAYIGDAVIGASSNIGAGTITCNYDGYNKFKTIIGDNAFIGSNSSLVAPVEIGDNAYIASGSVITADVPADALALGRARQETKEGRAKILREKYAAIKAAKSVSK.

The tract at residues 1–232 is pyrophosphorylase; it reads MTDRTCLSIV…VDNVIGINNR (232 aa). UDP-N-acetyl-alpha-D-glucosamine-binding positions include 11 to 14, Lys-25, Gln-78, and 83 to 84; these read LAAG and GT. A Mg(2+)-binding site is contributed by Asp-108. Positions 144, 158, 173, and 230 each coordinate UDP-N-acetyl-alpha-D-glucosamine. Asn-230 provides a ligand contact to Mg(2+). Residues 233–253 form a linker region; the sequence is AELAEAETIWQNRKRRELMLS. Residues 254–454 form an N-acetyltransferase region; it reads GVTLIAPETV…AIKAAKSVSK (201 aa). Arg-319 and Lys-337 together coordinate UDP-N-acetyl-alpha-D-glucosamine. His-349 serves as the catalytic Proton acceptor. Positions 352 and 363 each coordinate UDP-N-acetyl-alpha-D-glucosamine. Residues Ala-366, 372 to 373, Ser-391, Ser-409, and Arg-426 contribute to the acetyl-CoA site; that span reads NY.

This sequence in the N-terminal section; belongs to the N-acetylglucosamine-1-phosphate uridyltransferase family. It in the C-terminal section; belongs to the transferase hexapeptide repeat family. As to quaternary structure, homotrimer. The cofactor is Mg(2+).

The protein resides in the cytoplasm. It catalyses the reaction alpha-D-glucosamine 1-phosphate + acetyl-CoA = N-acetyl-alpha-D-glucosamine 1-phosphate + CoA + H(+). The catalysed reaction is N-acetyl-alpha-D-glucosamine 1-phosphate + UTP + H(+) = UDP-N-acetyl-alpha-D-glucosamine + diphosphate. It participates in nucleotide-sugar biosynthesis; UDP-N-acetyl-alpha-D-glucosamine biosynthesis; N-acetyl-alpha-D-glucosamine 1-phosphate from alpha-D-glucosamine 6-phosphate (route II): step 2/2. Its pathway is nucleotide-sugar biosynthesis; UDP-N-acetyl-alpha-D-glucosamine biosynthesis; UDP-N-acetyl-alpha-D-glucosamine from N-acetyl-alpha-D-glucosamine 1-phosphate: step 1/1. It functions in the pathway bacterial outer membrane biogenesis; LPS lipid A biosynthesis. Its function is as follows. Catalyzes the last two sequential reactions in the de novo biosynthetic pathway for UDP-N-acetylglucosamine (UDP-GlcNAc). The C-terminal domain catalyzes the transfer of acetyl group from acetyl coenzyme A to glucosamine-1-phosphate (GlcN-1-P) to produce N-acetylglucosamine-1-phosphate (GlcNAc-1-P), which is converted into UDP-GlcNAc by the transfer of uridine 5-monophosphate (from uridine 5-triphosphate), a reaction catalyzed by the N-terminal domain. The protein is Bifunctional protein GlmU of Brucella melitensis biotype 1 (strain ATCC 23456 / CCUG 17765 / NCTC 10094 / 16M).